A 223-amino-acid polypeptide reads, in one-letter code: Ribose-5-phosphate isomerase A (223 aa).

Substrate-binding positions include 32–35 (TGST), 85–88 (DGAD), and 98–101 (KGGG). Glutamate 107 functions as the Proton acceptor in the catalytic mechanism. Lysine 125 is a substrate binding site.

It belongs to the ribose 5-phosphate isomerase family. In terms of assembly, homodimer.

The catalysed reaction is aldehydo-D-ribose 5-phosphate = D-ribulose 5-phosphate. It participates in carbohydrate degradation; pentose phosphate pathway; D-ribose 5-phosphate from D-ribulose 5-phosphate (non-oxidative stage): step 1/1. Functionally, catalyzes the reversible conversion of ribose-5-phosphate to ribulose 5-phosphate. The chain is Ribose-5-phosphate isomerase A from Pseudomonas savastanoi pv. phaseolicola (strain 1448A / Race 6) (Pseudomonas syringae pv. phaseolicola (strain 1448A / Race 6)).